Consider the following 221-residue polypeptide: Deoxyribose-phosphate aldolase (221 aa).

The active-site Proton donor/acceptor is the Asp-90. Lys-152 functions as the Schiff-base intermediate with acetaldehyde in the catalytic mechanism. Lys-181 (proton donor/acceptor) is an active-site residue.

This sequence belongs to the DeoC/FbaB aldolase family. DeoC type 1 subfamily.

The protein resides in the cytoplasm. It catalyses the reaction 2-deoxy-D-ribose 5-phosphate = D-glyceraldehyde 3-phosphate + acetaldehyde. Its pathway is carbohydrate degradation; 2-deoxy-D-ribose 1-phosphate degradation; D-glyceraldehyde 3-phosphate and acetaldehyde from 2-deoxy-alpha-D-ribose 1-phosphate: step 2/2. In terms of biological role, catalyzes a reversible aldol reaction between acetaldehyde and D-glyceraldehyde 3-phosphate to generate 2-deoxy-D-ribose 5-phosphate. The sequence is that of Deoxyribose-phosphate aldolase from Exiguobacterium sp. (strain ATCC BAA-1283 / AT1b).